The sequence spans 242 residues: Caffeoyl-CoA O-methyltransferase (242 aa).

Position 16 (lysine 16) interacts with substrate. S-adenosyl-L-methionine contacts are provided by residues threonine 58, glutamate 80, 82–83, serine 88, aspartate 106, and alanine 135; that span reads GV. Aspartate 158 lines the substrate pocket. Aspartate 158 lines the a divalent metal cation pocket. Residue aspartate 160 coordinates S-adenosyl-L-methionine. A divalent metal cation is bound by residues aspartate 184 and asparagine 185. Asparagine 189 is a substrate binding site.

This sequence belongs to the class I-like SAM-binding methyltransferase superfamily. Cation-dependent O-methyltransferase family. CCoAMT subfamily. It depends on a divalent metal cation as a cofactor.

It catalyses the reaction (E)-caffeoyl-CoA + S-adenosyl-L-methionine = (E)-feruloyl-CoA + S-adenosyl-L-homocysteine + H(+). It functions in the pathway aromatic compound metabolism; phenylpropanoid biosynthesis. In terms of biological role, methylates caffeoyl-CoA to feruloyl-CoA and 5-hydroxyferuloyl-CoA to sinapoyl-CoA. Plays a role in the synthesis of feruloylated polysaccharides. Involved in the reinforcement of the plant cell wall. Also involved in the responding to wounding or pathogen challenge by the increased formation of cell wall-bound ferulic acid polymers. The polypeptide is Caffeoyl-CoA O-methyltransferase (CCOAOMT) (Solanum tuberosum (Potato)).